The chain runs to 156 residues: 16 kDa phloem protein 1 (156 aa).

The C2 domain maps to 1–108 (MAVGILEVSL…LEMGVEKGTA (108 aa)). Asp20, Asp26, Asp78, Asp80, Ser83, and Asp86 together coordinate Ca(2+).

Requires Ca(2+) as cofactor.

Its function is as follows. Binds to both sense and antisense RNA. Can also bind sheared DNA and dodecamer DNA with a low affinity. Interacts with mesophyll plasmodesmata to mediate its own cell-to-cell transport and potentiate RNA trafficking. May play a role in plant defense signaling. In Arabidopsis thaliana (Mouse-ear cress), this protein is 16 kDa phloem protein 1.